The following is a 481-amino-acid chain: Thyroid receptor-interacting protein 6 (481 aa).

Over residues 1 to 12 the composition is skewed to pro residues; the sequence is MSGPTWLPPKQP. Positions 1 to 259 are disordered; it reads MSGPTWLPPK…QVPLSQPPEE (259 aa). Residue Arg-25 is modified to Asymmetric dimethylarginine; alternate. Residue Arg-25 is modified to Omega-N-methylarginine; alternate. Tyr-55 bears the Phosphotyrosine; by SRC mark. A Phosphoserine modification is found at Ser-92. The segment covering 108–122 has biased composition (basic and acidic residues); that stretch reads DGGRGHAPRRPDRQA. Position 111 is an omega-N-methylarginine (Arg-111). Low complexity-rich tracts occupy residues 153 to 173 and 183 to 193; these read SPYGAPTPASYATASTPAGPA and PVRGCGPPRRG. Omega-N-methylarginine is present on residues Arg-185 and Arg-192. At Ser-195 the chain carries Phosphoserine. Arg-211 is subject to Omega-N-methylarginine. Over residues 221-233 the composition is skewed to basic and acidic residues; that stretch reads SHREPGPGVKEEA. Arg-243 bears the Omega-N-methylarginine mark. At Ser-254 the chain carries Phosphoserine. 3 LIM zinc-binding domains span residues 284 to 321, 344 to 403, and 404 to 472; these read CGGCGEDVVGDGAGVVALDRVFHVGCFVCSTCRAQLRG, CSTC…FAPR, and CSVC…RIQE. The interval 474-481 is interaction with MAGI1 and PTPN13; that stretch reads SATVTTDC.

Belongs to the zyxin/ajuba family. As to quaternary structure, specifically interacts with the ligand binding domain of the thyroid receptor (TR) in the presence of thyroid hormone. Interacts (via the third LIM domain and C-terminus) with PTPN13 (via the second PDZ domain). Interacts (via the second LIM domain or via the third LIM domain plus C-terminus) with PDLIM4 (via PDZ domain). Found in a complex with PTPN13 and PDLIM4. Interacts with SVIL isoform 2. Interacts with LPAR2 but not other LPA receptors. Interacts with PRKAA2. Interacts with MAGI1. Interacts with SCRIB. Post-translationally, phosphorylation at Tyr-55 by SRC is required for enhancement of lysophosphatidic acid-induced cell migration. Tyr-55 is dephosphorylated by PTPN13.

It localises to the cytoplasm. The protein localises to the cytoskeleton. The protein resides in the cell junction. It is found in the focal adhesion. Its subcellular location is the nucleus. In terms of biological role, relays signals from the cell surface to the nucleus to weaken adherens junction and promote actin cytoskeleton reorganization and cell invasiveness. Involved in lysophosphatidic acid-induced cell adhesion and migration. Acts as a transcriptional coactivator for NF-kappa-B and JUN, and mediates the transrepression of these transcription factors induced by glucocorticoid receptor. The polypeptide is Thyroid receptor-interacting protein 6 (TRIP6) (Bos taurus (Bovine)).